A 353-amino-acid polypeptide reads, in one-letter code: UPF0283 membrane protein YcjF (353 aa).

Transmembrane regions (helical) follow at residues M70–T90, V100–V120, and E213–W233.

The protein belongs to the UPF0283 family.

Its subcellular location is the cell inner membrane. The chain is UPF0283 membrane protein YcjF from Escherichia coli O139:H28 (strain E24377A / ETEC).